A 259-amino-acid chain; its full sequence is MSRKSVMSSTFEPSLSTSRQPLGPSLADTLPSINFGFDELRDRMAKFTAKFDAFIEQGRKRVLEERNQFRMNVAELQEDQRMKKKDIEILQLKTNTYQQTMAKEAAETREMQAAIASLTEQRDKQAAMRDALKEQIAATQREIDARLAAQRAHAAQLEAQARYNVPELDFWVTNLCMRIEGAGAEDRLKFVYTHIDERNWEREAWFELSMSGRDYDVRHCRPKLEREKVEKVLDRVNETRELVVLLKGMRELFVEAMKS.

Positions 1–20 are enriched in polar residues; the sequence is MSRKSVMSSTFEPSLSTSRQ. A disordered region spans residues 1–25; it reads MSRKSVMSSTFEPSLSTSRQPLGPS. A coiled-coil region spans residues 59–162; the sequence is RKRVLEERNQ…HAAQLEAQAR (104 aa).

Belongs to the SPC25 family. As to quaternary structure, component of the NDC80 complex, which consists of kpr-1/ndc80, kpr-2/nuf2, kpr-3/spc24 and kpr-4/spc25.

The protein resides in the nucleus. It is found in the chromosome. The protein localises to the centromere. It localises to the kinetochore. Acts as a component of the essential kinetochore-associated NDC80 complex, which is required for chromosome segregation and spindle checkpoint activity. This is Probable kinetochore protein spc25 (kpr-4) from Neurospora crassa (strain ATCC 24698 / 74-OR23-1A / CBS 708.71 / DSM 1257 / FGSC 987).